The sequence spans 196 residues: Glycerol-3-phosphate acyltransferase (196 aa).

4 helical membrane passes run 5-25 (GLIA…MILT), 70-90 (VVIA…LGAF), 111-131 (IGVL…IWLL), and 152-172 (LLLW…LTVL).

It belongs to the PlsY family. As to quaternary structure, probably interacts with PlsX.

The protein localises to the cell inner membrane. The enzyme catalyses an acyl phosphate + sn-glycerol 3-phosphate = a 1-acyl-sn-glycero-3-phosphate + phosphate. It participates in lipid metabolism; phospholipid metabolism. Catalyzes the transfer of an acyl group from acyl-phosphate (acyl-PO(4)) to glycerol-3-phosphate (G3P) to form lysophosphatidic acid (LPA). This enzyme utilizes acyl-phosphate as fatty acyl donor, but not acyl-CoA or acyl-ACP. This Nitrobacter winogradskyi (strain ATCC 25391 / DSM 10237 / CIP 104748 / NCIMB 11846 / Nb-255) protein is Glycerol-3-phosphate acyltransferase.